The primary structure comprises 1349 residues: Protein turtle homolog B (1349 aa).

A signal peptide spans 1 to 20; the sequence is MIWYVATFIASVIGTRGLAA. At 21–722 the chain is on the extracellular side; it reads EGAHGLREEP…DLTEDGLARP (702 aa). 5 Ig-like domains span residues 24–129, 139–226, 228–320, 324–415, and 420–504; these read HGLR…HNGS, PTFT…LLVQ, PPFI…AYLT, PARV…ARLV, and PYFT…THLT. 2 disulfides stabilise this stretch: cysteine 45-cysteine 113 and cysteine 161-cysteine 208. 2 N-linked (GlcNAc...) asparagine glycosylation sites follow: asparagine 241 and asparagine 258. Disulfide bonds link cysteine 250–cysteine 303, cysteine 346–cysteine 397, and cysteine 442–cysteine 488. Fibronectin type-III domains are found at residues 512 to 604 and 614 to 708; these read APGS…TLAF and LVTP…STDI. A glycan (N-linked (GlcNAc...) asparagine) is linked at asparagine 624. Residues 723 to 743 form a helical membrane-spanning segment; that stretch reads VLAGIVATICFLAAAILFSTL. The Cytoplasmic segment spans residues 744 to 1349; sequence AACFVNKQRK…SPPERALSKL (606 aa). Disordered regions lie at residues 758–817, 911–1081, and 1099–1349; these read RKKD…EKEL, QLTP…RGLP, and APKG…LSKL. Phosphoserine occurs at positions 775, 783, and 794. Residues 911–921 show a composition bias toward polar residues; the sequence is QLTPLSSSQES. Residues 985–998 show a composition bias toward low complexity; the sequence is VPEVGSPLSSVMSS. 3 stretches are compositionally biased toward polar residues: residues 1018–1033, 1129–1141, and 1199–1214; these read ENAS…TPTG, LVSQ…TSQG, and SRLS…SRTG. Arginine 1136 is modified (omega-N-methylarginine). Serine 1207 and serine 1215 each carry phosphoserine. Low complexity predominate over residues 1251–1271; sequence STPSTGSPSQSSRSGSPSYRP. The segment covering 1283-1292 has biased composition (pro residues); the sequence is PSPPPGPAPA.

Belongs to the immunoglobulin superfamily. Turtle family. In terms of assembly, found in a complex with MAGI2 and NLGN2, where it interacts with MAGI2 (via PDZ 5 and PDZ 6 domains). N-glycosylated and sialylated. Not significantly O-glycosylated.

It localises to the postsynaptic cell membrane. It is found in the postsynaptic density. In terms of biological role, transmembrane protein which is abundantly expressed in interneurons, where it may regulate inhibitory synapse development. May mediate homophilic cell adhesion. This Homo sapiens (Human) protein is Protein turtle homolog B (IGSF9B).